A 341-amino-acid chain; its full sequence is Pyrophosphate--fructose 6-phosphate 1-phosphotransferase (341 aa).

A diphosphate-binding site is contributed by Gly-10. Glu-103 is a binding site for Mg(2+). Substrate contacts are provided by residues 125-127 (TID), Arg-162, 169-171 (MGR), Glu-221, Arg-265, and 271-274 (HTQR). Asp-127 functions as the Proton acceptor in the catalytic mechanism.

It belongs to the phosphofructokinase type A (PFKA) family. Mixed-substrate PFK group III subfamily. As to quaternary structure, homotetramer. Requires Mg(2+) as cofactor.

The protein resides in the cytoplasm. It catalyses the reaction beta-D-fructose 6-phosphate + diphosphate = beta-D-fructose 1,6-bisphosphate + phosphate + H(+). The protein operates within carbohydrate degradation; glycolysis; D-glyceraldehyde 3-phosphate and glycerone phosphate from D-glucose: step 3/4. With respect to regulation, non-allosteric. Catalyzes the phosphorylation of D-fructose 6-phosphate, the first committing step of glycolysis. Uses inorganic phosphate (PPi) as phosphoryl donor instead of ATP like common ATP-dependent phosphofructokinases (ATP-PFKs), which renders the reaction reversible, and can thus function both in glycolysis and gluconeogenesis. Consistently, PPi-PFK can replace the enzymes of both the forward (ATP-PFK) and reverse (fructose-bisphosphatase (FBPase)) reactions. This is Pyrophosphate--fructose 6-phosphate 1-phosphotransferase from Amycolatopsis methanolica.